Here is a 198-residue protein sequence, read N- to C-terminus: MYSYIIGVITEVHENYIVLENNNIGYKIFITDFFRDNVSAFDEYKVYTEFVEREDASILYGFSSQKERELFNLLTDVTSIGPKYAMNILSTMTVDECKTAIITDDIKLLTQAPGVGKKTASRIILELKEKIEKDFVPSEKPVNKEVKRSNDSEFAREALLQLGYFKNDVDAFIENTDISGLSIEDIMKKAMKSLDSSR.

The segment at 1 to 63 (MYSYIIGVIT…EDASILYGFS (63 aa)) is domain I. The domain II stretch occupies residues 64–142 (SQKERELFNL…KDFVPSEKPV (79 aa)). Residues 143 to 153 (NKEVKRSNDSE) form a flexible linker region. Positions 153 to 198 (EFAREALLQLGYFKNDVDAFIENTDISGLSIEDIMKKAMKSLDSSR) are domain III.

Belongs to the RuvA family. In terms of assembly, homotetramer. Forms an RuvA(8)-RuvB(12)-Holliday junction (HJ) complex. HJ DNA is sandwiched between 2 RuvA tetramers; dsDNA enters through RuvA and exits via RuvB. An RuvB hexamer assembles on each DNA strand where it exits the tetramer. Each RuvB hexamer is contacted by two RuvA subunits (via domain III) on 2 adjacent RuvB subunits; this complex drives branch migration. In the full resolvosome a probable DNA-RuvA(4)-RuvB(12)-RuvC(2) complex forms which resolves the HJ.

The protein localises to the cytoplasm. Functionally, the RuvA-RuvB-RuvC complex processes Holliday junction (HJ) DNA during genetic recombination and DNA repair, while the RuvA-RuvB complex plays an important role in the rescue of blocked DNA replication forks via replication fork reversal (RFR). RuvA specifically binds to HJ cruciform DNA, conferring on it an open structure. The RuvB hexamer acts as an ATP-dependent pump, pulling dsDNA into and through the RuvAB complex. HJ branch migration allows RuvC to scan DNA until it finds its consensus sequence, where it cleaves and resolves the cruciform DNA. The protein is Holliday junction branch migration complex subunit RuvA of Finegoldia magna (strain ATCC 29328 / DSM 20472 / WAL 2508) (Peptostreptococcus magnus).